We begin with the raw amino-acid sequence, 369 residues long: Phenylalanine--tRNA ligase alpha subunit (369 aa).

Glutamate 270 contacts Mg(2+).

The protein belongs to the class-II aminoacyl-tRNA synthetase family. Phe-tRNA synthetase alpha subunit type 1 subfamily. Tetramer of two alpha and two beta subunits. Mg(2+) is required as a cofactor.

It localises to the cytoplasm. It carries out the reaction tRNA(Phe) + L-phenylalanine + ATP = L-phenylalanyl-tRNA(Phe) + AMP + diphosphate + H(+). In Phenylobacterium zucineum (strain HLK1), this protein is Phenylalanine--tRNA ligase alpha subunit.